Consider the following 448-residue polypeptide: Glucose-6-phosphate isomerase (448 aa).

Glu-290 acts as the Proton donor in catalysis. Catalysis depends on residues His-311 and Lys-425.

It belongs to the GPI family.

It is found in the cytoplasm. It carries out the reaction alpha-D-glucose 6-phosphate = beta-D-fructose 6-phosphate. The protein operates within carbohydrate biosynthesis; gluconeogenesis. Its pathway is carbohydrate degradation; glycolysis; D-glyceraldehyde 3-phosphate and glycerone phosphate from D-glucose: step 2/4. In terms of biological role, catalyzes the reversible isomerization of glucose-6-phosphate to fructose-6-phosphate. The polypeptide is Glucose-6-phosphate isomerase (Oceanobacillus iheyensis (strain DSM 14371 / CIP 107618 / JCM 11309 / KCTC 3954 / HTE831)).